Reading from the N-terminus, the 561-residue chain is Putative transport protein AHA_2450 (561 aa).

5 helical membrane-spanning segments follow: residues 8 to 28, 37 to 57, 66 to 86, 90 to 110, and 161 to 181; these read LLHQ…LLLG, IGNT…GFEF, FMLF…SVFL, IHYI…TVGL, and NMGI…MLVV. RCK C-terminal domains follow at residues 206–291 and 293–376; these read SDNE…NYRN and KEVF…KIGF. Helical transmembrane passes span 386-406, 409-429, 450-470, 476-496, and 541-561; these read LVAF…SLVF, LEFG…MGYL, LGLA…ILDH, AVVL…GYLF, and TYAV…GFWF.

This sequence belongs to the AAE transporter (TC 2.A.81) family. YbjL subfamily.

It localises to the cell membrane. This is Putative transport protein AHA_2450 from Aeromonas hydrophila subsp. hydrophila (strain ATCC 7966 / DSM 30187 / BCRC 13018 / CCUG 14551 / JCM 1027 / KCTC 2358 / NCIMB 9240 / NCTC 8049).